The following is a 208-amino-acid chain: Uracil phosphoribosyltransferase (208 aa).

Residues arginine 78, arginine 103, and 130 to 138 (DPMLATGGS) contribute to the 5-phospho-alpha-D-ribose 1-diphosphate site. Uracil is bound by residues isoleucine 193 and 198–200 (GDA). 5-phospho-alpha-D-ribose 1-diphosphate is bound at residue aspartate 199.

It belongs to the UPRTase family. Requires Mg(2+) as cofactor.

The enzyme catalyses UMP + diphosphate = 5-phospho-alpha-D-ribose 1-diphosphate + uracil. Its pathway is pyrimidine metabolism; UMP biosynthesis via salvage pathway; UMP from uracil: step 1/1. Allosterically activated by GTP. Functionally, catalyzes the conversion of uracil and 5-phospho-alpha-D-ribose 1-diphosphate (PRPP) to UMP and diphosphate. The chain is Uracil phosphoribosyltransferase from Wolinella succinogenes (strain ATCC 29543 / DSM 1740 / CCUG 13145 / JCM 31913 / LMG 7466 / NCTC 11488 / FDC 602W) (Vibrio succinogenes).